Here is a 673-residue protein sequence, read N- to C-terminus: UvrABC system protein B (673 aa).

Residues 26-183 enclose the Helicase ATP-binding domain; that stretch reads EGLEDGLAHQ…RRLAELQYTR (158 aa). Position 39-46 (39-46) interacts with ATP; that stretch reads GVTGSGKT. The short motif at 92–115 is the Beta-hairpin element; the sequence is YYDYYQPEAYVPSSDTFIEKDASV. The Helicase C-terminal domain occupies 431–597; the sequence is QVDDLLSEIR…GLNKKVVDIL (167 aa). Residues 608-627 form a disordered region; the sequence is AKGRGKSRPIVEPDNVPMDM. The 36-residue stretch at 633–668 folds into the UVR domain; it reads QQKIHELEGLMMQHAQNLEFEEAAQIRDQLHQLREL.

This sequence belongs to the UvrB family. In terms of assembly, forms a heterotetramer with UvrA during the search for lesions. Interacts with UvrC in an incision complex.

The protein resides in the cytoplasm. Functionally, the UvrABC repair system catalyzes the recognition and processing of DNA lesions. A damage recognition complex composed of 2 UvrA and 2 UvrB subunits scans DNA for abnormalities. Upon binding of the UvrA(2)B(2) complex to a putative damaged site, the DNA wraps around one UvrB monomer. DNA wrap is dependent on ATP binding by UvrB and probably causes local melting of the DNA helix, facilitating insertion of UvrB beta-hairpin between the DNA strands. Then UvrB probes one DNA strand for the presence of a lesion. If a lesion is found the UvrA subunits dissociate and the UvrB-DNA preincision complex is formed. This complex is subsequently bound by UvrC and the second UvrB is released. If no lesion is found, the DNA wraps around the other UvrB subunit that will check the other stand for damage. The chain is UvrABC system protein B from Escherichia fergusonii (strain ATCC 35469 / DSM 13698 / CCUG 18766 / IAM 14443 / JCM 21226 / LMG 7866 / NBRC 102419 / NCTC 12128 / CDC 0568-73).